A 309-amino-acid chain; its full sequence is Olfactory receptor 8U1 (309 aa).

Over 1-25 (MAHINCTQATEFILVGLTDHQELKM) the chain is Extracellular. N5 carries an N-linked (GlcNAc...) asparagine glycan. The chain crosses the membrane as a helical span at residues 26-46 (PLFVLFLSIYLFTVVGNLGLI). The Cytoplasmic portion of the chain corresponds to 47 to 54 (LLIRADTS). Residues 55 to 75 (LNTPMYFFLSNLAFVDFCYSS) traverse the membrane as a helical segment. Over 76 to 99 (VITPKMLGNFLYKQNVISFDACAT) the chain is Extracellular. C97 and C189 are oxidised to a cystine. Residues 100–120 (QLGCFLTFMISESLLLASMAY) form a helical membrane-spanning segment. At 121–139 (DRYVAICNPLLYMVVMTPG) the chain is on the cytoplasmic side. The chain crosses the membrane as a helical span at residues 140 to 160 (ICIQLVAVPYSYSFLMALFHT). The Extracellular segment spans residues 161-197 (ILTFRLSYCHSNIVNHFYCDDMPLLRLTCSDTRFKQL). Residues 198-217 (WIFACAGIMFISSLLIVFVS) form a helical membrane-spanning segment. Residues 218–237 (YMFIISAILRMHSAEGRQKA) lie on the Cytoplasmic side of the membrane. A helical transmembrane segment spans residues 238-258 (FSTCGSHMLAVTIFYGTLIFM). The Extracellular portion of the chain corresponds to 259–271 (YLQPSSSHALDTD). Residues 272-292 (KMASVFYTVIIPMLNPLIYSL) form a helical membrane-spanning segment. At 293-309 (QNKEVKEALKKIIINKN) the chain is on the cytoplasmic side.

The protein belongs to the G-protein coupled receptor 1 family.

The protein resides in the cell membrane. In terms of biological role, odorant receptor. The sequence is that of Olfactory receptor 8U1 (OR8U1) from Homo sapiens (Human).